We begin with the raw amino-acid sequence, 281 residues long: Diaminopimelate epimerase (281 aa).

Substrate is bound by residues Asn-13 and Asn-66. The Proton donor role is filled by Cys-75. Residues 76 to 77, Asn-164, Asn-197, and 215 to 216 contribute to the substrate site; these read GN and ER. The active-site Proton acceptor is Cys-224. 225–226 is a substrate binding site; the sequence is GT.

Belongs to the diaminopimelate epimerase family. As to quaternary structure, homodimer.

The protein localises to the cytoplasm. It carries out the reaction (2S,6S)-2,6-diaminopimelate = meso-2,6-diaminopimelate. It functions in the pathway amino-acid biosynthesis; L-lysine biosynthesis via DAP pathway; DL-2,6-diaminopimelate from LL-2,6-diaminopimelate: step 1/1. Its function is as follows. Catalyzes the stereoinversion of LL-2,6-diaminopimelate (L,L-DAP) to meso-diaminopimelate (meso-DAP), a precursor of L-lysine and an essential component of the bacterial peptidoglycan. This Gloeothece citriformis (strain PCC 7424) (Cyanothece sp. (strain PCC 7424)) protein is Diaminopimelate epimerase.